The sequence spans 528 residues: Beta-hexosaminidase subunit alpha (528 aa).

Positions 1-22 (MAGCRLWVSLLLAAALACLATA) are cleaved as a signal peptide. A propeptide spanning residues 23-88 (LWPWPQYIQT…PRPSFSNKQQ (66 aa)) is cleaved from the precursor. A disulfide bond links cysteine 58 and cysteine 104. N-linked (GlcNAc...) asparagine glycosylation is found at asparagine 115, asparagine 157, and asparagine 295. Cysteine 277 and cysteine 328 are joined by a disulfide. Glutamate 323 serves as the catalytic Proton donor. Positions 422–423 (NR) are critical for hydrolysis GM2 gangliosides. N-linked (GlcNAc...) asparagine glycosylation occurs at asparagine 487. The cysteines at positions 504 and 521 are disulfide-linked.

Belongs to the glycosyl hydrolase 20 family. There are 3 beta-hexosaminidase isozymes: isozyme A (hexosaminidase A) is a heterodimer composed of one subunit alpha and one subunit beta (chain A and B); isozyme B (hexosaminidase B) is a homodimer of two beta subunits (two chains A and B); isozyme S (hexosaminidase S) is a homodimer of two alpha subunits. The composition of the dimer (isozyme A versus isozyme S) has a significant effect on the substrate specificity of the alpha subunit active site. As to expression, ubiquitous. Most abundant in testis, adrenal, epididymis and heart. Low levels seen in the liver.

Its subcellular location is the lysosome. It catalyses the reaction Hydrolysis of terminal non-reducing N-acetyl-D-hexosamine residues in N-acetyl-beta-D-hexosaminides.. The catalysed reaction is N-acetyl-beta-D-galactosaminyl-(1-&gt;4)-beta-D-3-sulfogalactosyl-(1-&gt;4)-beta-D-glucosyl-(1&lt;-&gt;1')-ceramide + H2O = a beta-D-3-sulfogalactosyl-(1-&gt;4)-beta-D-glucosyl-(1&lt;-&gt;1')-ceramide + N-acetyl-beta-D-galactosamine. It carries out the reaction a ganglioside GM2 (d18:1(4E)) + H2O = a ganglioside GM3 (d18:1(4E)) + N-acetyl-beta-D-galactosamine. The enzyme catalyses a ganglioside GM2 + H2O = a ganglioside GM3 + N-acetyl-beta-D-galactosamine. It catalyses the reaction beta-D-GalNAc-(1-&gt;4)-alpha-L-IdoA-(1-&gt;3)-beta-D-GalNAc-4-sulfate-(1-&gt;4)-alpha-L-IdoA-(1-&gt;3)-D-GalNAc-4-sulfate + H2O = alpha-L-IdoA-(1-&gt;3)-beta-D-GalNAc-4-sulfate-(1-&gt;4)-alpha-L-IdoA-(1-&gt;3)-D-GalNAc-4-sulfate + N-acetyl-D-galactosamine. The catalysed reaction is N-acetyl-beta-D-6-sulfogalactosaminyl-(1-&gt;4)-alpha-L-iduronyl-(1-&gt;3)-N-acetyl-D-6-sulfogalactosamine + H2O = alpha-L-iduronyl-(1-&gt;3)-N-acetyl-D-6-sulfogalactosamine + N-acetyl-D-6-sulfogalactosamine. Its activity is regulated as follows. Addition of GM2A stimulates the hydrolysis of sulfated glycosphingolipid SM2 and the ganglioside GM2. Hydrolyzes the non-reducing end N-acetyl-D-hexosamine and/or sulfated N-acetyl-D-hexosamine of glycoconjugates, such as the oligosaccharide moieties from proteins and neutral glycolipids, or from certain mucopolysaccharides. The isozyme S is as active as the isozyme A on the anionic bis-sulfated glycans, the chondroitin-6-sulfate trisaccharide (C6S-3), and the dermatan sulfate pentasaccharide, and the sulfated glycosphingolipid SM2. The isozyme B does not hydrolyze each of these substrates, however hydrolyzes efficiently neutral oligosaccharide. Only the isozyme A is responsible for the degradation of GM2 gangliosides in the presence of GM2A. The polypeptide is Beta-hexosaminidase subunit alpha (Mus musculus (Mouse)).